We begin with the raw amino-acid sequence, 350 residues long: CMP-N-acetylneuraminate-beta-galactosamide-alpha-2,3-sialyltransferase 2 (350 aa).

Residues 1–6 are Cytoplasmic-facing; that stretch reads MKCSLR. The helical; Signal-anchor for type II membrane protein transmembrane segment at 7-27 threads the bilayer; it reads VWFLSMAFLLVFIMSLLFTYS. Residues 28–350 are Lumenal-facing; the sequence is HHSMATLPYL…ASKIEVYRGN (323 aa). 3 disulfides stabilise this stretch: cysteine 70/cysteine 75, cysteine 72/cysteine 149, and cysteine 152/cysteine 291. Substrate is bound by residues glutamine 116, asparagine 157, and asparagine 180. N-linked (GlcNAc...) asparagine glycosylation occurs at asparagine 211. Substrate-binding residues include tyrosine 240, tyrosine 276, glycine 280, glycine 300, histidine 309, and histidine 326.

The protein belongs to the glycosyltransferase 29 family. Homodimer; disulfide-linked. Homodimer formation occurs in the endoplasmic reticulum. In terms of processing, the soluble form derives from the membrane form by proteolytic processing. Post-translationally, N-glycosylated; necessary for proper exit from endoplasmic reticulum and trafficking to the Golgi apparatus. As to expression, strongly expressed in brain and liver and to a lesser extent in heart and kidney. Scarcely detectable in lung, pancreas, spleen and submaxillary gland. Expressed in L5 dorsal root ganglion (DRG) neurons (at protein level).

The protein resides in the golgi apparatus. The protein localises to the golgi stack membrane. Its subcellular location is the secreted. The catalysed reaction is a beta-D-galactosyl-(1-&gt;3)-N-acetyl-alpha-D-galactosaminyl derivative + CMP-N-acetyl-beta-neuraminate = an N-acetyl-alpha-neuraminyl-(2-&gt;3)-beta-D-galactosyl-(1-&gt;3)-N-acetyl-alpha-D-galactosaminyl derivative + CMP + H(+). It catalyses the reaction a ganglioside GM1 (d18:1(4E)) + CMP-N-acetyl-beta-neuraminate = a ganglioside GD1a (d18:1(4E)) + CMP + H(+). The enzyme catalyses ganglioside GM1 (d18:1(4E)/18:0) + CMP-N-acetyl-beta-neuraminate = ganglioside GD1a (18:1(4E)/18:0) + CMP + H(+). It carries out the reaction a ganglioside GA1 + CMP-N-acetyl-beta-neuraminate = a ganglioside GM1b + CMP + H(+). The catalysed reaction is a ganglioside GA1 (d18:1(4E)) + CMP-N-acetyl-beta-neuraminate = a ganglioside GM1b (d18:1(4E)) + CMP + H(+). It catalyses the reaction a ganglioside GD1b + CMP-N-acetyl-beta-neuraminate = a ganglioside GT1b + CMP + H(+). The enzyme catalyses a ganglioside GD1b (d18:1(4E)) + CMP-N-acetyl-beta-neuraminate = a ganglioside GT1b (d18:1(4E)) + CMP + H(+). It carries out the reaction a globoside GalGb4Cer + CMP-N-acetyl-beta-neuraminate = a globoside MSGG + CMP + H(+). It functions in the pathway protein modification; protein glycosylation. It participates in glycolipid biosynthesis. A beta-galactoside alpha2-3 sialyltransferase primarily involved in terminal sialylation of ganglio and globo series glycolipids. Catalyzes the transfer of sialic acid (N-acetyl-neuraminic acid; Neu5Ac) from the nucleotide sugar donor CMP-Neu5Ac onto acceptor Galbeta-(1-&gt;3)-GalNAc-terminated glycoconjugates through an alpha2-3 linkage. Sialylates GM1/GM1a, GA1/asialo-GM1 and GD1b gangliosides to form GD1a, GM1b and GT1b, respectively. Together with ST3GAL3, primarily responsible for biosynthesis of brain GD1a and GT1b that function as ligands for myelin-associated glycoprotein MAG on axons, regulating MAG expression and axonal myelin stability and regeneration. Via GT1b regulates TLR2 signaling in spinal cord microglia in response to nerve injury. Responsible for the sialylation of the pluripotent stem cell- and cancer stem cell-associated antigen SSEA3, forming SSEA4. Sialylates with low efficiency asialofetuin, presumably onto O-glycosidically linked Galbeta-(1-&gt;3)-GalNAc-O-Ser. The polypeptide is CMP-N-acetylneuraminate-beta-galactosamide-alpha-2,3-sialyltransferase 2 (Mus musculus (Mouse)).